Here is a 480-residue protein sequence, read N- to C-terminus: Sporozoite surface protein P36p (480 aa).

An N-terminal signal peptide occupies residues 1-22 (MKRRSIFMYYCFCFLLKYVAFS). 6-Cys domains follow at residues 23–156 (NVPN…FKKM) and 159–298 (KIKG…TSKN). Residues Asn28, Asn40, Asn92, Asn111, and Asn184 are each glycosylated (N-linked (GlcNAc...) asparagine). 6 disulfide bridges follow: Cys37–Cys49, Cys63–Cys137, Cys80–Cys135, Cys163–Cys187, Cys201–Cys280, and Cys221–Cys278. N-linked (GlcNAc...) asparagine glycans are attached at residues Asn294, Asn368, Asn375, Asn392, Asn405, Asn409, and Asn424. The tract at residues 358–415 (KMDSSDDDESNETESSENESNERTHNGNRANKDANNSEKMTGNRRKKNNSINNTNYYS) is disordered. Acidic residues predominate over residues 362-376 (SDDDESNETESSENE). The span at 377-393 (SNERTHNGNRANKDANN) shows a compositional bias: basic and acidic residues. Positions 406–415 (NSINNTNYYS) are enriched in low complexity. A lipid anchor (GPI-anchor amidated serine) is attached at Ser457. Residues 458 to 480 (SSYYEVFNYFSIAFILIIHMLLL) constitute a propeptide, removed in mature form.

The protein resides in the cell surface. It is found in the cell membrane. Involved in sporozoite infection of hepatocytes and replication therein. In Plasmodium yoelii yoelii, this protein is Sporozoite surface protein P36p (P52).